An 81-amino-acid chain; its full sequence is uncharacterized protein (81 aa).

This is an uncharacterized protein from Escherichia coli (strain K12).